Reading from the N-terminus, the 117-residue chain is MDTETSPLLSHNLSTREGIKQSTQGLLAHTIAKYPGTTAILLGILILLVIILIIVAIVYYNRAVDCNSNMPKPPPSYYVQQPEPHHHFPVFFRRRKNSTSQQSHIPSDEQLAELAHS.

N-linked (GlcNAc...) asparagine; by host glycosylation is present at asparagine 12. A helical membrane pass occupies residues alanine 39–tyrosine 59. The disordered stretch occupies residues lysine 96 to serine 117. Asparagine 97 carries N-linked (GlcNAc...) asparagine; by host glycosylation.

The protein belongs to the asfivirus minor capsid protein p17 family. In terms of assembly, interacts with the minor capsid protein M1249L and with the hexon capsid protein p72 capsomers; these interactions form a rigid zipper structure that stabilizes the capsomers. Interacts with host STING1.

The protein resides in the virion membrane. It localises to the host endoplasmic reticulum membrane. In terms of biological role, together with the penton and the other minor capsid proteins (M1249L, p49), forms a complicated network immediately below the outer capsid shell, stabilizing the whole capsid. Three copies of p17 encircle each p72 capsomer in the inner capsid shell, anchoring p72 capsomers on the inner membrane. Required for the assembly of the capsid and icosahedral morphogenesis. Additionally, inhibits the host cGAS-STING pathway through its interaction with STING1 and subsequent interference of the recruitment of downstream components TBK1 and IKBKE. The sequence is that of Minor capsid protein p17 from African swine fever virus (isolate Tick/South Africa/Pretoriuskop Pr4/1996) (ASFV).